Here is a 203-residue protein sequence, read N- to C-terminus: Dephospho-CoA kinase (203 aa).

Residues 6-203 (RLGITGGIAC…SLLGRGGKGG (198 aa)) form the DPCK domain. 14–19 (ACGKSV) serves as a coordination point for ATP.

The protein belongs to the CoaE family.

It is found in the cytoplasm. It carries out the reaction 3'-dephospho-CoA + ATP = ADP + CoA + H(+). The protein operates within cofactor biosynthesis; coenzyme A biosynthesis; CoA from (R)-pantothenate: step 5/5. Its function is as follows. Catalyzes the phosphorylation of the 3'-hydroxyl group of dephosphocoenzyme A to form coenzyme A. This is Dephospho-CoA kinase from Thermosynechococcus vestitus (strain NIES-2133 / IAM M-273 / BP-1).